A 346-amino-acid polypeptide reads, in one-letter code: Inner membrane protein YnjI (346 aa).

Residues Met-1–Leu-38 are Periplasmic-facing. Residues Leu-39–Ile-59 traverse the membrane as a helical segment. Over Thr-60–Gly-68 the chain is Cytoplasmic. Residues Leu-69–Ala-89 traverse the membrane as a helical segment. Over Gly-90 to Ser-234 the chain is Periplasmic. A helical transmembrane segment spans residues Ser-235–Phe-255. At Gln-256 to Ser-346 the chain is on the cytoplasmic side.

It localises to the cell inner membrane. This is Inner membrane protein YnjI (ynjI) from Escherichia coli (strain K12).